Reading from the N-terminus, the 244-residue chain is MDNEEWFPLKQTHYPPPTIPSMKTGHPTGPISIGHIIPDLRHLDNVINCKGFEPFPPNMDVFTAHYEQCHFGDHLNSEFVVQAKAAAPIKNIVPGVDVTGSAGLHHTNITSDRWEYDSVVEYAVYPTRQYIDRLLESKEVKQYIQKSKKLLGGWCVYMVTGIMVARGGGRNVVSEEKGAGVFGNVGFQVPGIGEXAPEVGWDTKTKTKVNAHHTTDFVCAIRLVKIAKSGLRSSWTMKKVTREF.

The tract at residues 1–22 is disordered; the sequence is MDNEEWFPLKQTHYPPPTIPSM.

This sequence belongs to the gasdermin family. Heterooligomer; the heterooligomer with rcd-1-1 forms a ring-shaped pore complex when inserted in the membrane.

The protein localises to the cytoplasm. It localises to the cell membrane. Gasdermin-like protein involved in heterokaryon incompatibility, a process that ensures that during spontaneous vegetative cell fusion, only compatible cells from the same colony survive (non-self-recognition). In N.crassa, the rcd-1 locus exists as 2 incompatible alleles, rcd-1-1 (AC Q7SBA0) and rcd-1-2 (this entry). During the allorecognition process, forms a heterooligomer with rcd-1-1, thereby forming a functional gasdermin-like complex that binds to membranes and forms pores, triggering cell death. Binds negatively charged phospholipids, such as cardiolipin and phosphatidylserine. Also binds to phosphoinositides, preferentially to phosphatidylinositol-3-phosphate (PtdIns-3-P), PtdIns-5-P and PtdIns-3,5-P2. In Neurospora crassa, this protein is Gasdermin-like protein rcd-1-2.